A 314-amino-acid polypeptide reads, in one-letter code: DNA-directed RNA polymerase subunit alpha (314 aa).

Residues 1-228 (MAQYTIECVE…DQLRPLQEIT (228 aa)) form an alpha N-terminal domain (alpha-NTD) region. The segment at 241–314 (NTVGQVPIEE…SLPKDKPARS (74 aa)) is alpha C-terminal domain (alpha-CTD).

Belongs to the RNA polymerase alpha chain family. In cyanobacteria the RNAP catalytic core is composed of 2 alpha, 1 beta, 1 beta', 1 gamma and 1 omega subunit. When a sigma factor is associated with the core the holoenzyme is formed, which can initiate transcription.

The catalysed reaction is RNA(n) + a ribonucleoside 5'-triphosphate = RNA(n+1) + diphosphate. In terms of biological role, DNA-dependent RNA polymerase catalyzes the transcription of DNA into RNA using the four ribonucleoside triphosphates as substrates. The chain is DNA-directed RNA polymerase subunit alpha from Gloeobacter violaceus (strain ATCC 29082 / PCC 7421).